A 463-amino-acid polypeptide reads, in one-letter code: Metalloprotease slr0863 (463 aa).

This sequence belongs to the peptidase U62 family.

Functionally, probable metalloprotease. The chain is Metalloprotease slr0863 from Synechocystis sp. (strain ATCC 27184 / PCC 6803 / Kazusa).